The chain runs to 97 residues: Large ribosomal subunit protein uL23 (97 aa).

The protein belongs to the universal ribosomal protein uL23 family. Part of the 50S ribosomal subunit. Contacts protein L29, and trigger factor when it is bound to the ribosome.

In terms of biological role, one of the early assembly proteins it binds 23S rRNA. One of the proteins that surrounds the polypeptide exit tunnel on the outside of the ribosome. Forms the main docking site for trigger factor binding to the ribosome. This is Large ribosomal subunit protein uL23 from Brucella canis (strain ATCC 23365 / NCTC 10854 / RM-666).